Here is a 225-residue protein sequence, read N- to C-terminus: Tryptophan synthase beta chain (225 aa).

It belongs to the TrpB family. In terms of assembly, tetramer of two alpha and two beta chains. Pyridoxal 5'-phosphate serves as cofactor.

The catalysed reaction is (1S,2R)-1-C-(indol-3-yl)glycerol 3-phosphate + L-serine = D-glyceraldehyde 3-phosphate + L-tryptophan + H2O. It functions in the pathway amino-acid biosynthesis; L-tryptophan biosynthesis; L-tryptophan from chorismate: step 5/5. In terms of biological role, the beta subunit is responsible for the synthesis of L-tryptophan from indole and L-serine. The chain is Tryptophan synthase beta chain (trpB) from Buchnera aphidicola subsp. Rhopalosiphum padi.